The primary structure comprises 191 residues: MSIKSDRWIRKMAEEHGMIEPYEPGQVRFNEAGDKLVSYGTSSYGYDVRCAREFKVFTNVHSAIVDPKNFDENSFIDIVGDECIIPPNSFALARTVEYFRIPRDVLTICLGKSTYARCGIIVNVTPLEPEWEGHVTLEFSNTTTLPARIYAGEGVAQMLFFQSDADDICETSYKDRGGKYQGQRGVTLPRT.

DCTP is bound by residues 112–117 (KSTYAR), 136–138 (TLE), glutamine 157, tyrosine 173, and glutamine 183. Glutamate 138 serves as the catalytic Proton donor/acceptor.

It belongs to the dCTP deaminase family. Homotrimer.

It carries out the reaction dCTP + H2O + H(+) = dUTP + NH4(+). Its pathway is pyrimidine metabolism; dUMP biosynthesis; dUMP from dCTP (dUTP route): step 1/2. In terms of biological role, catalyzes the deamination of dCTP to dUTP. The polypeptide is dCTP deaminase (Psychrobacter sp. (strain PRwf-1)).